The sequence spans 387 residues: Putative ribosomal RNA large subunit methyltransferase MJ1649 (387 aa).

The region spanning 5–81 (LIKLEIDRRA…EEIDYDFFYK (77 aa)) is the PUA domain.

It belongs to the methyltransferase superfamily. RlmI family.

It localises to the cytoplasm. The protein is Putative ribosomal RNA large subunit methyltransferase MJ1649 of Methanocaldococcus jannaschii (strain ATCC 43067 / DSM 2661 / JAL-1 / JCM 10045 / NBRC 100440) (Methanococcus jannaschii).